The primary structure comprises 1065 residues: Ceruloplasmin (1065 aa).

The signal sequence occupies residues 1–19; it reads MKILILGIFLFLCSTPAWA. 2 consecutive Plastocyanin-like domains span residues 20–200 and 209–357; these read KEKH…LIIC and KEKH…VQEC. Positions 55, 64, and 67 each coordinate Na(+). Cu(2+) contacts are provided by histidine 120 and histidine 122. O2 is bound at residue histidine 120. Residue lysine 128 participates in Ca(2+) binding. Asparagine 138 carries N-linked (GlcNAc...) (complex) asparagine glycosylation. Ca(2+) is bound by residues glutamine 143, aspartate 146, and aspartate 147. An intrachain disulfide couples cysteine 174 to cysteine 200. Residues histidine 180 and histidine 182 each coordinate Cu(2+). Histidine 180 provides a ligand contact to O2. Serine 256 lines the Na(+) pocket. The cysteines at positions 276 and 357 are disulfide-linked. Cu(2+) is bound by residues histidine 295, cysteine 338, and histidine 343. N-linked (GlcNAc...) (complex) asparagine glycans are attached at residues asparagine 358 and asparagine 397. Plastocyanin-like domains follow at residues 370 to 560 and 570 to 718; these read HVRH…MKIC and RQKD…VNQC. 3 residues coordinate Na(+): phenylalanine 408, glycine 417, and tyrosine 420. A disulfide bond links cysteine 534 and cysteine 560. The N-linked (GlcNAc...) asparagine glycan is linked to asparagine 588. Serine 617 contributes to the Na(+) binding site. A disulfide bridge connects residues cysteine 637 and cysteine 718. Cu(2+)-binding residues include histidine 656, cysteine 699, histidine 704, and methionine 709. Residue cysteine 699 is the Nucleophile; for glutathione peroxidase activity of the active site. At serine 722 the chain carries Phosphoserine; by FAM20C. 2 consecutive Plastocyanin-like domains span residues 730 to 900 and 908 to 1061; these read GERT…LIVC and FNPR…QNED. N-linked (GlcNAc...) (complex) asparagine glycosylation occurs at asparagine 762. Residues phenylalanine 767, glycine 776, and tyrosine 779 each coordinate Na(+). Cysteines 874 and 900 form a disulfide. N-linked (GlcNAc...) asparagine glycosylation occurs at asparagine 926. Serine 955 lines the Na(+) pocket. Cu(2+)-binding residues include histidine 994, histidine 997, histidine 999, histidine 1039, cysteine 1040, histidine 1041, histidine 1045, and methionine 1050. Residues histidine 997 and histidine 999 each coordinate O2. Histidine 1041 is an O2 binding site.

The protein belongs to the multicopper oxidase family. Found in a complex with MPO and LTF; interacts directly with MPO and LTF, which allows Fe(3+) incorporation into LTF, activation of CP ferroxidase activity and protection of CP antioxidant properties by MPO. Cu(2+) is required as a cofactor. As to expression, expressed by the liver and secreted in plasma.

The protein resides in the secreted. The enzyme catalyses 4 Fe(2+) + O2 + 4 H(+) = 4 Fe(3+) + 2 H2O. It carries out the reaction 4 Cu(+) + O2 + 4 H(+) = 4 Cu(2+) + 2 H2O. It catalyses the reaction a hydroperoxide + 2 glutathione = an alcohol + glutathione disulfide + H2O. The catalysed reaction is 4 nitric oxide + O2 + 2 H2O = 4 nitrite + 4 H(+). The enzyme catalyses 2 glutathione + H2O2 = glutathione disulfide + 2 H2O. In terms of biological role, multifunctional blue, copper-binding (6-7 atoms per molecule) glycoprotein. It has ferroxidase activity oxidizing Fe(2+) to Fe(3+) without releasing radical oxygen species. It is involved in iron transport across the cell membrane. Copper ions provide a large number of enzymatic activites. Oxidizes highly toxic ferrous ions to the ferric state for further incorporation onto apo-transferrins, catalyzes Cu(+) oxidation and promotes the oxidation of biogenic amines such as norepinephrin and serotonin. Provides Cu(2+) ions for the ascorbate-mediated deaminase degradation of the heparan sulfate chains of GPC1. Has glutathione peroxidase-like activity, can remove both hydrogen peroxide and lipid hydroperoxide in the presence of thiols. Also shows NO-oxidase and NO2 synthase activities that determine endocrine NO homeostasis. This chain is Ceruloplasmin, found in Homo sapiens (Human).